A 419-amino-acid polypeptide reads, in one-letter code: Synaptotagmin-1 (419 aa).

Topologically, residues 1-58 (MVSESHHEALAAPPVTTVATVLPSNATEPASPGEGKEDAFSKLKEKFMNELHKIPLPP) are vesicular. Asparagine 25 is a glycosylation site (N-linked (GlcNAc...) asparagine). The helical transmembrane segment at 59–80 (WALIAIAIVAVLLVLTCCFCIC) threads the bilayer. S-palmitoyl cysteine attachment occurs at residues cysteine 75, cysteine 76, cysteine 78, cysteine 80, and cysteine 83. Over 81–419 (KKCLFKKKNK…EVDAMLAVKK (339 aa)) the chain is Cytoplasmic. The segment at 108-139 (KDLGKTMKDQDDDAETGLTDGEEKEEPKEEEK) is disordered. A compositionally biased stretch (acidic residues) spans 117 to 131 (QDDDAETGLTDGEEK). A Phosphothreonine modification is found at threonine 126. The tract at residues 133-379 (EPKEEEKLGK…AIGKVFVGYN (247 aa)) is phospholipid binding. Residues 139–258 (KLGKLQYSLD…DFGHVTEEWR (120 aa)) form the C2 1 domain. Ca(2+) contacts are provided by leucine 169, aspartate 170, and aspartate 176. Residue tyrosine 227 is modified to Phosphotyrosine. Ca(2+)-binding residues include aspartate 228, phenylalanine 229, aspartate 230, serine 233, lysine 234, and aspartate 236. The residue at position 262 (serine 262) is a Phosphoserine. Positions 270-403 (KLGDICFSLR…NPRRPIAQWH (134 aa)) constitute a C2 2 domain. Residues aspartate 301 and aspartate 307 each contribute to the Ca(2+) site. 2 positions are modified to phosphoserine: serine 340 and serine 342. Residues aspartate 361, aspartate 363, and aspartate 369 each contribute to the Ca(2+) site.

The protein belongs to the synaptotagmin family. In terms of assembly, homotetramer. Heterodimer; heterodimerizes with SYT2 in presence of calcium. Interacts with SCAMP5. Interacts with STON2. Forms a complex with SV2B, syntaxin 1 and SNAP25. Interacts with SV2A, SV2B and SV2C. Interacts with RIMS1. Interacts with PRRT2. Interacts with DNAJC5 in a phosphorylation-dependent manner. Interacts (via N-terminus) with RAB3A. Interacts with SYT12. Interacts with calmodulin. Interacts with DNM1 (via C-terminal proline-rich domain (PRD)); this interaction facilitates vesicle fission during clathrin-mediated endocytosis (CME). Ca(2+) serves as cofactor. Glycosylated.

Its subcellular location is the cytoplasmic vesicle. The protein resides in the secretory vesicle membrane. It is found in the secretory vesicle. It localises to the synaptic vesicle membrane. The protein localises to the chromaffin granule membrane. Its subcellular location is the cytoplasm. Calcium sensor that participates in triggering neurotransmitter release at the synapse. May have a regulatory role in the membrane interactions during trafficking of synaptic vesicles at the active zone of the synapse. It binds acidic phospholipids with a specificity that requires the presence of both an acidic head group and a diacyl backbone. A Ca(2+)-dependent interaction between synaptotagmin and putative receptors for activated protein kinase C has also been reported. It can bind to at least three additional proteins in a Ca(2+)-independent manner; these are neurexins, syntaxin and AP2. Plays a role in dendrite formation by melanocytes. In Pongo abelii (Sumatran orangutan), this protein is Synaptotagmin-1.